The primary structure comprises 347 residues: Protein RecA (347 aa).

Residue 64 to 71 (GPESSGKT) coordinates ATP.

The protein belongs to the RecA family.

It is found in the cytoplasm. Can catalyze the hydrolysis of ATP in the presence of single-stranded DNA, the ATP-dependent uptake of single-stranded DNA by duplex DNA, and the ATP-dependent hybridization of homologous single-stranded DNAs. It interacts with LexA causing its activation and leading to its autocatalytic cleavage. In Bartonella henselae (strain ATCC 49882 / DSM 28221 / CCUG 30454 / Houston 1) (Rochalimaea henselae), this protein is Protein RecA.